Here is a 297-residue protein sequence, read N- to C-terminus: Urease accessory protein UreD 2 (297 aa).

This sequence belongs to the UreD family. In terms of assembly, ureD, UreF and UreG form a complex that acts as a GTP-hydrolysis-dependent molecular chaperone, activating the urease apoprotein by helping to assemble the nickel containing metallocenter of UreC. The UreE protein probably delivers the nickel.

The protein localises to the cytoplasm. Functionally, required for maturation of urease via the functional incorporation of the urease nickel metallocenter. This Methylorubrum populi (strain ATCC BAA-705 / NCIMB 13946 / BJ001) (Methylobacterium populi) protein is Urease accessory protein UreD 2.